Here is a 581-residue protein sequence, read N- to C-terminus: Proline--tRNA ligase (581 aa).

This sequence belongs to the class-II aminoacyl-tRNA synthetase family. ProS type 1 subfamily. Homodimer.

Its subcellular location is the cytoplasm. It carries out the reaction tRNA(Pro) + L-proline + ATP = L-prolyl-tRNA(Pro) + AMP + diphosphate. Catalyzes the attachment of proline to tRNA(Pro) in a two-step reaction: proline is first activated by ATP to form Pro-AMP and then transferred to the acceptor end of tRNA(Pro). As ProRS can inadvertently accommodate and process non-cognate amino acids such as alanine and cysteine, to avoid such errors it has two additional distinct editing activities against alanine. One activity is designated as 'pretransfer' editing and involves the tRNA(Pro)-independent hydrolysis of activated Ala-AMP. The other activity is designated 'posttransfer' editing and involves deacylation of mischarged Ala-tRNA(Pro). The misacylated Cys-tRNA(Pro) is not edited by ProRS. This chain is Proline--tRNA ligase, found in Methylibium petroleiphilum (strain ATCC BAA-1232 / LMG 22953 / PM1).